An 823-amino-acid chain; its full sequence is Ankyrin repeat domain-containing protein 20A1 (823 aa).

ANK repeat units lie at residues 66–95, 99–128, 132–161, 165–194, and 198–227; these read QHRT…QIDV, ENRT…NPNL, YGNT…HIEA, DNNT…SSHA, and LRRS…DVFA. Disordered stretches follow at residues 301 to 343 and 355 to 402; these read VPEK…EVED and VQTL…LSEN. Over residues 372-384 the composition is skewed to basic and acidic residues; sequence QERHERSEKKQPQ. Coiled-coil stretches lie at residues 431–480, 565–724, and 776–805; these read KKLK…KQLE, EMIT…NNST, and LVLE…EKTE.

The chain is Ankyrin repeat domain-containing protein 20A1 (ANKRD20A1) from Homo sapiens (Human).